The following is a 718-amino-acid chain: Mitochondrial potassium channel ATP-binding subunit (718 aa).

A mitochondrion-targeting transit peptide spans 1-25 (MLVHLFRVGIRGGPFPGRLLPPLRF). 3 helical membrane passes run 128 to 148 (LLVL…NVQI), 179 to 199 (THLL…LVLL), and 279 to 299 (LLLM…GSGL). In terms of domain architecture, ABC transmembrane type-1 spans 133-420 (VAVVLALGAA…LSVLFGQVVR (288 aa)). The ABC transporter domain occupies 455-692 (VTFQNVCFSY…GGLYAELIRR (238 aa)). 490 to 497 (GQSGGGKT) is a binding site for ATP. Residues 697-718 (APRTAAPLPKKPEGPRNHQHKS) form a disordered region.

This sequence belongs to the ABC transporter superfamily. ABCB family. Multidrug resistance exporter (TC 3.A.1.201) subfamily. In terms of assembly, the mitochondrial potassium channel (mitoK(ATP)) is composed of 4 subunits of CCDC51/MITOK and 4 subunits of ABCB8/MITOSUR. Physically interacts with PAAT. Interacts with Neuropilin-1 (NRP1) in mitochondria.

It is found in the mitochondrion inner membrane. Its activity is regulated as follows. Channel activity inhibited by ATP via ABCB8/MITOSUR subunit. ATP-binding subunit of the mitochondrial ATP-gated potassium channel (mitoK(ATP)). Together with pore-forming subunit CCDC51/MITOK of the mitoK(ATP) channel, mediates ATP-dependent potassium currents across the mitochondrial inner membrane. An increase in ATP intracellular levels closes the channel, inhibiting K(+) transport, whereas a decrease in ATP levels enhances K(+) uptake in the mitochondrial matrix. Plays a role in mitochondrial iron transport. Required for maintenance of normal cardiac function, possibly by influencing mitochondrial iron export and regulating the maturation of cytosolic iron sulfur cluster-containing enzymes. This chain is Mitochondrial potassium channel ATP-binding subunit (ABCB8), found in Pongo abelii (Sumatran orangutan).